The following is a 121-amino-acid chain: Flagellar protein FliT (121 aa).

Positions Met1 to Leu50 are required for homodimerization. The interval Met60–Val98 is fliD binding.

Belongs to the FliT family. Homodimer. Interacts with FliD and FlhC.

It localises to the cytoplasm. The protein localises to the cytosol. Functionally, dual-function protein that regulates the transcription of class 2 flagellar operons and that also acts as an export chaperone for the filament-capping protein FliD. As a transcriptional regulator, acts as an anti-FlhDC factor; it directly binds FlhC, thus inhibiting the binding of the FlhC/FlhD complex to class 2 promoters, resulting in decreased expression of class 2 flagellar operons. As a chaperone, effects FliD transition to the membrane by preventing its premature polymerization, and by directing it to the export apparatus. This chain is Flagellar protein FliT, found in Escherichia coli O157:H7.